A 443-amino-acid polypeptide reads, in one-letter code: Phosphoribosylamine--glycine ligase (443 aa).

The ATP-grasp domain occupies 109-324 (RNLFKKYNIK…FLDVCFGISN (216 aa)). An ATP-binding site is contributed by 140–202 (MTGLGKDVVV…EEKLVGVEFT (63 aa)). Mg(2+) contacts are provided by Gln282, Glu294, and Asn296. Mn(2+)-binding residues include Gln282, Glu294, and Asn296.

It belongs to the GARS family. It depends on Mg(2+) as a cofactor. Mn(2+) serves as cofactor.

It catalyses the reaction 5-phospho-beta-D-ribosylamine + glycine + ATP = N(1)-(5-phospho-beta-D-ribosyl)glycinamide + ADP + phosphate + H(+). It functions in the pathway purine metabolism; IMP biosynthesis via de novo pathway; N(1)-(5-phospho-D-ribosyl)glycinamide from 5-phospho-alpha-D-ribose 1-diphosphate: step 2/2. The polypeptide is Phosphoribosylamine--glycine ligase (Methanococcus vannielii (strain ATCC 35089 / DSM 1224 / JCM 13029 / OCM 148 / SB)).